The sequence spans 315 residues: Methionyl-tRNA formyltransferase (315 aa).

(6S)-5,6,7,8-tetrahydrofolate is bound at residue 113–116 (SILP).

The protein belongs to the Fmt family.

The enzyme catalyses L-methionyl-tRNA(fMet) + (6R)-10-formyltetrahydrofolate = N-formyl-L-methionyl-tRNA(fMet) + (6S)-5,6,7,8-tetrahydrofolate + H(+). Its function is as follows. Attaches a formyl group to the free amino group of methionyl-tRNA(fMet). The formyl group appears to play a dual role in the initiator identity of N-formylmethionyl-tRNA by promoting its recognition by IF2 and preventing the misappropriation of this tRNA by the elongation apparatus. The protein is Methionyl-tRNA formyltransferase of Vibrio cholerae serotype O1 (strain M66-2).